A 433-amino-acid chain; its full sequence is Adenylosuccinate synthetase (433 aa).

GTP is bound by residues 11–17 (GDEGKGK) and 39–41 (GHT). Catalysis depends on Asp-12, which acts as the Proton acceptor. Positions 12 and 39 each coordinate Mg(2+). Residues 12–15 (DEGK), 37–40 (NAGH), Thr-134, Arg-148, Asn-230, Thr-245, and Arg-309 contribute to the IMP site. His-40 serves as the catalytic Proton donor. Position 305–311 (305–311 (VTTGRKR)) interacts with substrate. GTP is bound by residues Arg-311, 337-339 (KLD), and 419-421 (GTG).

This sequence belongs to the adenylosuccinate synthetase family. In terms of assembly, homodimer. Requires Mg(2+) as cofactor.

The protein resides in the cytoplasm. It catalyses the reaction IMP + L-aspartate + GTP = N(6)-(1,2-dicarboxyethyl)-AMP + GDP + phosphate + 2 H(+). It functions in the pathway purine metabolism; AMP biosynthesis via de novo pathway; AMP from IMP: step 1/2. Its function is as follows. Plays an important role in the de novo pathway and in the salvage pathway of purine nucleotide biosynthesis. Catalyzes the first committed step in the biosynthesis of AMP from IMP. The protein is Adenylosuccinate synthetase of Saccharomyces cerevisiae (strain Lalvin EC1118 / Prise de mousse) (Baker's yeast).